The following is a 122-amino-acid chain: Large ribosomal subunit protein uL14c (122 aa).

Belongs to the universal ribosomal protein uL14 family. In terms of assembly, part of the 50S ribosomal subunit.

The protein resides in the plastid. Its subcellular location is the chloroplast. Its function is as follows. Binds to 23S rRNA. This Chlorella vulgaris (Green alga) protein is Large ribosomal subunit protein uL14c.